The sequence spans 323 residues: Chitin-binding lectin 1 (323 aa).

The first 22 residues, M1–A22, serve as a signal peptide directing secretion. 4-hydroxyproline occurs at positions 50, 51, 53, and 55. 4 O-linked (Ara...) hydroxyproline glycosylation sites follow: P50, P51, P53, and P55. 2 consecutive Chitin-binding type-1 domains span residues Y58–G101 and E105–L149. 8 disulfides stabilise this stretch: C61–C77, C70–C83, C76–C90, C95–C99, C108–C125, C117–C131, C124–C138, and C143–C147. Residues S78, W80, W82, and Y89 each contribute to the chitin site. The interval P150–Y210 is extensin-like. An O-linked (Gal) serine glycan is attached at S151. Repeat copies occupy residues S151–P159, S160–P164, S165–P167, S168–P172, S173–P180, S181–P185, S186–P190, S191–P192, S193–P198, and S200–P206. The interval S151–P206 is 10 X approximate repeats of S-P-P-P-P. 8 positions are modified to 4-hydroxyproline: P152, P153, P154, P155, P156, P157, P158, and P159. 8 O-linked (Ara...) hydroxyproline glycosylation sites follow: P152, P153, P154, P155, P156, P157, P158, and P159. The disordered stretch occupies residues P154–P203. The O-linked (Gal) serine glycan is linked to S160. 4-hydroxyproline is present on residues P161, P162, P163, and P164. O-linked (Ara...) hydroxyproline glycans are attached at residues P161, P162, P163, and P164. Residue S165 is glycosylated (O-linked (Gal) serine). 4-hydroxyproline is present on residues P166 and P167. O-linked (Ara...) hydroxyproline glycosylation is found at P166 and P167. O-linked (Gal) serine glycosylation is present at S168. P169, P170, P171, and P172 each carry 4-hydroxyproline. O-linked (Ara...) hydroxyproline glycosylation is found at P169, P170, P171, and P172. An O-linked (Gal) serine glycan is attached at S173. P174, P175, P176, P177, P178, P179, and P180 each carry 4-hydroxyproline. P174, P175, P176, P177, P178, P179, and P180 each carry an O-linked (Ara...) hydroxyproline glycan. A glycan (O-linked (Gal) serine) is linked at S181. P182, P183, P184, and P185 each carry 4-hydroxyproline. 4 O-linked (Ara...) hydroxyproline glycosylation sites follow: P182, P183, P184, and P185. S186 carries O-linked (Gal) serine glycosylation. 4 positions are modified to 4-hydroxyproline: P187, P188, P189, and P190. 4 O-linked (Ara...) hydroxyproline glycosylation sites follow: P187, P188, P189, and P190. O-linked (Gal) serine glycosylation occurs at S191. P192 is subject to 4-hydroxyproline. P192 carries O-linked (Ara...) hydroxyproline glycosylation. O-linked (Gal) serine glycosylation occurs at S193. A 4-hydroxyproline mark is found at P194, P195, P196, P197, and P198. 5 O-linked (Ara...) hydroxyproline glycosylation sites follow: P194, P195, P196, P197, and P198. An O-linked (Gal) serine glycan is attached at S200. Residues P201, P202, P203, P204, P205, P206, and P209 each carry the 4-hydroxyproline modification. 7 O-linked (Ara...) hydroxyproline glycosylation sites follow: P201, P202, P203, P204, P205, P206, and P209. Chitin-binding type-1 domains lie at Y210 to G253 and E257 to T301. Cystine bridges form between C213–C229, C222–C235, C228–C242, C247–C251, C260–C277, C269–C283, C276–C290, and C295–C299. Residues S230, W232, W234, and Y241 each coordinate chitin.

This sequence in the central section; belongs to the extensin family. In terms of assembly, homodimer. In terms of processing, heavily glycosylated with beta-arabinose on hydroxyprolines and with alpha-galactose on serines of the extensin-like domain. As no other sugars could be detected in the native lectin, it is unlikely that the three putative N-glycosylation sites are actually glycosylated. The N-terminus is blocked. The N-terminal sequences proposed in PubMed:9022287 and PubMed:11056399 originate probably from truncated proteins.

Its function is as follows. This protein might function as a defense against chitin containing pathogens. Binds to several branched or linear N-acetyllactosamine-containing glycosphingolipids and also to lactosylceramide with sphingosine and non-hydroxy fatty acids. This is Chitin-binding lectin 1 from Solanum tuberosum (Potato).